A 130-amino-acid polypeptide reads, in one-letter code: Blasticidin-S deaminase (130 aa).

The 129-residue stretch at Met-1–Glu-129 folds into the CMP/dCMP-type deaminase domain. Substrate is bound at residue Ser-28. Cys-54 lines the Zn(2+) pocket. The active-site Proton donor is Glu-56. Arg-82 lines the substrate pocket. Zn(2+)-binding residues include Cys-88 and Cys-91. Residues Tyr-126 and Trp-128 each contribute to the substrate site.

It belongs to the cytidine and deoxycytidylate deaminase family. In terms of assembly, homotetramer. Zn(2+) is required as a cofactor.

It catalyses the reaction blasticidin S + H2O + H(+) = deaminohydroxyblasticidin S + NH4(+). In terms of biological role, catalyzes the deamination of the cytosine moiety of the antibiotics blasticidin S, cytomycin and acetylblasticidin S. This Aspergillus terreus protein is Blasticidin-S deaminase (bsd).